The chain runs to 659 residues: Biosynthetic arginine decarboxylase 2 (659 aa).

K119 carries the post-translational modification N6-(pyridoxal phosphate)lysine. 311-321 (LNVGGGLAVDY) serves as a coordination point for substrate.

Belongs to the Orn/Lys/Arg decarboxylase class-II family. SpeA subfamily. It depends on Mg(2+) as a cofactor. Pyridoxal 5'-phosphate is required as a cofactor.

The enzyme catalyses L-arginine + H(+) = agmatine + CO2. Its function is as follows. Catalyzes the biosynthesis of agmatine from arginine. The polypeptide is Biosynthetic arginine decarboxylase 2 (speA2) (Synechocystis sp. (strain ATCC 27184 / PCC 6803 / Kazusa)).